The sequence spans 321 residues: Lipoyl synthase (321 aa).

Cysteine 68, cysteine 73, cysteine 79, cysteine 94, cysteine 98, cysteine 101, and serine 308 together coordinate [4Fe-4S] cluster. The Radical SAM core domain maps to 80–297 (FNHGTATFMI…KAEALAMGFT (218 aa)).

Belongs to the radical SAM superfamily. Lipoyl synthase family. It depends on [4Fe-4S] cluster as a cofactor.

The protein localises to the cytoplasm. The catalysed reaction is [[Fe-S] cluster scaffold protein carrying a second [4Fe-4S](2+) cluster] + N(6)-octanoyl-L-lysyl-[protein] + 2 oxidized [2Fe-2S]-[ferredoxin] + 2 S-adenosyl-L-methionine + 4 H(+) = [[Fe-S] cluster scaffold protein] + N(6)-[(R)-dihydrolipoyl]-L-lysyl-[protein] + 4 Fe(3+) + 2 hydrogen sulfide + 2 5'-deoxyadenosine + 2 L-methionine + 2 reduced [2Fe-2S]-[ferredoxin]. It participates in protein modification; protein lipoylation via endogenous pathway; protein N(6)-(lipoyl)lysine from octanoyl-[acyl-carrier-protein]: step 2/2. In terms of biological role, catalyzes the radical-mediated insertion of two sulfur atoms into the C-6 and C-8 positions of the octanoyl moiety bound to the lipoyl domains of lipoate-dependent enzymes, thereby converting the octanoylated domains into lipoylated derivatives. The chain is Lipoyl synthase from Salmonella paratyphi A (strain AKU_12601).